The following is a 105-amino-acid chain: Small ribosomal subunit protein uS10 (105 aa).

The protein belongs to the universal ribosomal protein uS10 family. Part of the 30S ribosomal subunit.

In terms of biological role, involved in the binding of tRNA to the ribosomes. This Chlamydia muridarum (strain MoPn / Nigg) protein is Small ribosomal subunit protein uS10.